The following is a 364-amino-acid chain: NF-kappa-B inhibitor epsilon (364 aa).

Residues 1 to 108 form a disordered region; it reads MSDARKGPDE…GSPLPPAGVL (108 aa). Residue Ser-18 is modified to Phosphoserine. The segment covering 36-48 has biased composition (low complexity); sequence PGSGSSQSGCPQP. A compositionally biased stretch (basic and acidic residues) spans 51-70; that stretch reads HAPETHKEPEKEDADGERAD. A compositionally biased stretch (pro residues) spans 93–104; the sequence is PSPPAPGSPLPP. ANK repeat units lie at residues 122 to 155, 157 to 186, 190 to 219, 233 to 262, 267 to 296, and 300 to 329; these read DGDTLLHLAVIHEAPSVLFCCLAFLPQEVLDIQN, LYQTALHLAVHLDQPDVVRALVLKGASRIL, HGDTALHVACRRQNLACACCLLEEQPEPGR, QGLACLHIATLQRNQPLIELLLQNGADIDV, SGKTALHLAVETQERSLVQFLLQAGARVDA, and NGCTPLHLAAGRGLNSISSTLCEAGADSLL.

This sequence belongs to the NF-kappa-B inhibitor family. As to quaternary structure, interacts with RELA, REL, NFKB1 nuclear factor NF-kappa-B p50 subunit and NFKB2 nuclear factor NF-kappa-B p52 subunit. Interacts with HNRNPA2B1; the interaction may be mediated by the RRM2 domain of HNRNPA2B1, and HNRNPA2B1 may interact simultaneously with FAM76B and either NFKBIA or NFKBIE to form a complex. Post-translationally, serine phosphorylated; followed by proteasome-dependent degradation.

It localises to the cytoplasm. Functionally, sequesters NF-kappa-B transcription factor complexes in the cytoplasm, thereby inhibiting their activity. Sequestered complexes include NFKB1/p50-RELA/p65 and NFKB1/p50-REL/c-Rel complexes. Limits B-cell activation in response to pathogens, and also plays an important role in B-cell development. In Mus musculus (Mouse), this protein is NF-kappa-B inhibitor epsilon (Nfkbie).